Consider the following 110-residue polypeptide: Hydrogenase maturation factor HypA (110 aa).

H2 is a binding site for Ni(2+). Zn(2+) is bound by residues C70, C73, C86, and C89.

This sequence belongs to the HypA/HybF family.

In terms of biological role, involved in the maturation of [NiFe] hydrogenases. Required for nickel insertion into the metal center of the hydrogenase. This Geotalea uraniireducens (strain Rf4) (Geobacter uraniireducens) protein is Hydrogenase maturation factor HypA.